Reading from the N-terminus, the 637-residue chain is MIEVGETMGELPTNKIVFCERSWKTPVSILAFLIFVTFAWGIYLLDHYDEDDNFHGADDLSVGQFLVRNIAMPHVQRLYHTVPPAVVGVGGGGVNAGPVASGAIVGTNGYVITTLHSVSKLPEISVQVATTGGIRRFPAQVVKTIPGHDLALLKMQTTEKFLHFRMADVQTVVPGQQVFAFGRNMAGAPLVRQGLVQSADAPLAVGATQITHLLRSDAVYSWEQTGGPLVNAQGDLVGINIAATGPTGKVEGFTVPAQVIVSHLQDVVRFKKGSATAPGQPQTQTVAAGSTNWWSKARAVVGGPTAIPGMGMNVVQGNVVKGNVAPSIPSGMPFIDTDHVGGAKIGGYSVADIVGLVMLALAAGVTGGMMTMGGGVLQVAGMMVFFGYGMYLIRPVVFLTNVVVYGAASLRNDKAQLVQWDKVKPLIPWGIAGVILGYFIGNAIGDSVVGILLGLFALIMAGKAVMEILQPNAGEETAESISATEAEDEMDELMALADGTSRPKASGLALPEGHARSAVLGLPMGLFSGILGISGGVIEVPLQRYVGRISLQNAIANSSVLVFWASVAGSVVAFLHGSSTGLIHWEAPVTLALVMIPGAYVGGIIGARLMRVLPVRVLKGVYAATMAAIALKMLTSV.

Over 1–24 (MIEVGETMGELPTNKIVFCERSWK) the chain is Cytoplasmic. A helical membrane pass occupies residues 25–45 (TPVSILAFLIFVTFAWGIYLL). The Lumenal segment spans residues 46–352 (DHYDEDDNFH…AKIGGYSVAD (307 aa)). Positions 78 to 268 (LYHTVPPAVV…VIVSHLQDVV (191 aa)) are protease-like. Residues His148 and His263 each coordinate a divalent metal cation. Residues 353-373 (IVGLVMLALAAGVTGGMMTMG) form a helical membrane-spanning segment. The interval 370–637 (MTMGGGVLQV…AIALKMLTSV (268 aa)) is TSUP-like. Residues 374–378 (GGVLQ) lie on the Cytoplasmic side of the membrane. A helical transmembrane segment spans residues 379–399 (VAGMMVFFGYGMYLIRPVVFL). At 400-416 (TNVVVYGAASLRNDKAQ) the chain is on the lumenal side. A helical membrane pass occupies residues 417–437 (LVQWDKVKPLIPWGIAGVILG). Tyr438 is a topological domain (cytoplasmic). The helical transmembrane segment at 439-459 (FIGNAIGDSVVGILLGLFALI) threads the bilayer. The Lumenal portion of the chain corresponds to 460 to 517 (MAGKAVMEILQPNAGEETAESISATEAEDEMDELMALADGTSRPKASGLALPEGHARS). A helical membrane pass occupies residues 518–538 (AVLGLPMGLFSGILGISGGVI). Residues 539-554 (EVPLQRYVGRISLQNA) lie on the Cytoplasmic side of the membrane. Residues 555-575 (IANSSVLVFWASVAGSVVAFL) traverse the membrane as a helical segment. The Lumenal segment spans residues 576 to 586 (HGSSTGLIHWE). Residues 587–607 (APVTLALVMIPGAYVGGIIGA) traverse the membrane as a helical segment. Residues 608–616 (RLMRVLPVR) lie on the Cytoplasmic side of the membrane. A helical transmembrane segment spans residues 617-637 (VLKGVYAATMAAIALKMLTSV).

In the N-terminal section; belongs to the peptidase S1C family. It in the C-terminal section; belongs to the 4-toluene sulfonate uptake permease (TSUP) (TC 2.A.102) family. Requires a metal cation as cofactor. In terms of processing, subject to proteolytic cleavage by MamE.

It is found in the magnetosome membrane. Functionally, plays 2 roles; promotes magnetite nucleation/formation and activates the MamE protease. Despite its near conservation of a protease-like sequence, this is probably not a protease. Required in conjunction with MamP for proteolysis of at least MamE, itself and MamP. May transport a solute that controls MamE's protease activity. May place individual iron atoms into the magnetite lattice. The sequence is that of Probable membrane transporter protein MamO (mamO) from Paramagnetospirillum magneticum (strain ATCC 700264 / AMB-1) (Magnetospirillum magneticum).